Here is a 317-residue protein sequence, read N- to C-terminus: Serpentine receptor class delta-47 (317 aa).

Transmembrane regions (helical) follow at residues 8-28 (IFYP…FVVV), 42-62 (VLFC…LLQL), 89-109 (CLYF…LLTI), 128-148 (IVII…IYSV), 185-205 (YLII…GLYT), 239-259 (ACLP…VIGT), and 270-290 (ISVL…YSVA).

The protein belongs to the nematode receptor-like protein srd family.

The protein localises to the membrane. This is Serpentine receptor class delta-47 (srd-47) from Caenorhabditis elegans.